Reading from the N-terminus, the 462-residue chain is Argininosuccinate lyase (462 aa).

This sequence belongs to the lyase 1 family. Argininosuccinate lyase subfamily.

It localises to the cytoplasm. The enzyme catalyses 2-(N(omega)-L-arginino)succinate = fumarate + L-arginine. It functions in the pathway amino-acid biosynthesis; L-arginine biosynthesis; L-arginine from L-ornithine and carbamoyl phosphate: step 3/3. The chain is Argininosuccinate lyase from Methylobacterium sp. (strain 4-46).